The sequence spans 172 residues: Peptide methionine sulfoxide reductase MsrA 1 (172 aa).

The active site involves cysteine 14.

It belongs to the MsrA Met sulfoxide reductase family.

It carries out the reaction L-methionyl-[protein] + [thioredoxin]-disulfide + H2O = L-methionyl-(S)-S-oxide-[protein] + [thioredoxin]-dithiol. It catalyses the reaction [thioredoxin]-disulfide + L-methionine + H2O = L-methionine (S)-S-oxide + [thioredoxin]-dithiol. Functionally, has an important function as a repair enzyme for proteins that have been inactivated by oxidation. Catalyzes the reversible oxidation-reduction of methionine sulfoxide in proteins to methionine. The sequence is that of Peptide methionine sulfoxide reductase MsrA 1 (msrA1) from Mesorhizobium japonicum (strain LMG 29417 / CECT 9101 / MAFF 303099) (Mesorhizobium loti (strain MAFF 303099)).